A 406-amino-acid polypeptide reads, in one-letter code: UPF0754 membrane protein Cyan7425_4067 (406 aa).

The helical transmembrane segment at 381-401 (IVTLGGVLGLLIGIAQSVLLL) threads the bilayer.

The protein belongs to the UPF0754 family.

The protein resides in the cell inner membrane. This is UPF0754 membrane protein Cyan7425_4067 from Cyanothece sp. (strain PCC 7425 / ATCC 29141).